The primary structure comprises 124 residues: MEPFSPTICETVPLYPQWNGLIAGHLETSDISETFMSFVFYATTINVIIELKKLLILIINGGNTRGAITSRDIRYLTPFKICTCARFKKKKGSRNRNEIAHFSFRFRRFCKSLSRYTRVLLMFM.

This is an uncharacterized protein from Saccharomyces cerevisiae (strain ATCC 204508 / S288c) (Baker's yeast).